The sequence spans 199 residues: MASLWCGNLLRLGSGLSMSCLALSVLLLAQLTGAAKNFEDVRCKCICPPYKENPGHIYNKNISQKDCDCLHVVEPMPVRGPDVEAYCLRCECKYEERSSVTIKVTIIIYLSILGLLLLYMVYLTLVEPILKRRLFGHSQLLQSDDDVGDHQPFANAHDVLARSRSRANVLNKVEYAQQRWKLQVQEQRKSVFDRHVVLS.

The first 34 residues, 1–34 (MASLWCGNLLRLGSGLSMSCLALSVLLLAQLTGA), serve as a signal peptide directing secretion. N-linked (GlcNAc...) asparagine glycosylation is present at Asn61. The helical transmembrane segment at 106–126 (IIIYLSILGLLLLYMVYLTLV) threads the bilayer. 2 positions are modified to phosphoserine: Ser143 and Ser190.

It belongs to the TMEM9 family. N-glycosylated.

It localises to the lysosome membrane. The protein resides in the early endosome membrane. Its function is as follows. Enhances production of pro-inflammatory cytokines induced by TNF, IL1B, and TLR ligands. Has a role in TNF activation of both the NF-kappaB and MAPK pathways. The protein is Transmembrane protein 9B (Tmem9b) of Mus musculus (Mouse).